Reading from the N-terminus, the 569-residue chain is Arginine--tRNA ligase (569 aa).

Positions 123–133 match the 'HIGH' region motif; the sequence is PNIAKRMHIGH.

This sequence belongs to the class-I aminoacyl-tRNA synthetase family. As to quaternary structure, monomer.

It localises to the cytoplasm. The enzyme catalyses tRNA(Arg) + L-arginine + ATP = L-arginyl-tRNA(Arg) + AMP + diphosphate. This Fusobacterium nucleatum subsp. nucleatum (strain ATCC 25586 / DSM 15643 / BCRC 10681 / CIP 101130 / JCM 8532 / KCTC 2640 / LMG 13131 / VPI 4355) protein is Arginine--tRNA ligase.